The following is a 61-amino-acid chain: Large ribosomal subunit protein bL28 (61 aa).

The segment at 1–26 is disordered; it reads MAKDFVTGRKTTFGKKRSHALNQTNR.

Belongs to the bacterial ribosomal protein bL28 family.

This Ligilactobacillus salivarius (strain UCC118) (Lactobacillus salivarius) protein is Large ribosomal subunit protein bL28.